Here is an 825-residue protein sequence, read N- to C-terminus: Zygotic DNA replication licensing factor mcm6-B (825 aa).

The C4-type zinc-finger motif lies at 159 to 186 (CLDCQTLVRDVEQQFKYTQPSICRNPVC). Residues 347–554 (LYHNLCTSLF…TDYAIARRIV (208 aa)) enclose the MCM domain. 397-404 (GDPSTAKS) contributes to the ATP binding site. Residues 529-532 (SRFD) carry the Arginine finger motif. The segment covering 668–679 (DQEDEHEVEEPQ) has biased composition (acidic residues). The interval 668–690 (DQEDEHEVEEPQEGINGDADVPN) is disordered.

The protein belongs to the MCM family. In terms of assembly, component of the mcm2-7 complex (RLF-M). The complex forms a toroidal hexameric ring with the proposed subunit order mcm2-mcm6-mcm4-mcm7-mcm3-mcm5 (By simililarity). Begins to associate with zmcm3, mcm4 and mcm7 into mcm complexes at the neurula stage.

Its subcellular location is the nucleus. It carries out the reaction ATP + H2O = ADP + phosphate + H(+). Acts as a component of the mcm2-7 complex (mcm complex) which is the putative replicative helicase essential for 'once per cell cycle' DNA replication initiation and elongation in eukaryotic cells. The active ATPase sites in the mcm2-7 ring are formed through the interaction surfaces of two neighboring subunits such that a critical structure of a conserved arginine finger motif is provided in trans relative to the ATP-binding site of the Walker A box of the adjacent subunit. The six ATPase active sites, however, are likely to contribute differentially to the complex helicase activity. The existence of maternal and zygotic forms of mcm3 and mcm6 suggests that specific forms of mcm2-7 complexes may be used during different stages of development. May replace mmcm6 in the mcm2-7 complex. In Xenopus laevis (African clawed frog), this protein is Zygotic DNA replication licensing factor mcm6-B (zmcm6-b).